Reading from the N-terminus, the 205-residue chain is Guanylate kinase (205 aa).

Residues 7 to 185 (GNIFIISAAS…AEGDLLHIVN (179 aa)) enclose the Guanylate kinase-like domain. 14–21 (AASGTGKT) is an ATP binding site.

It belongs to the guanylate kinase family.

It localises to the cytoplasm. The enzyme catalyses GMP + ATP = GDP + ADP. Functionally, essential for recycling GMP and indirectly, cGMP. The protein is Guanylate kinase of Neisseria gonorrhoeae (strain ATCC 700825 / FA 1090).